The primary structure comprises 149 residues: MERTFIAIKPDGVQRGLVGTIIGRFEQKGFKLVGLKQLKPSRELAEQHYAVHRERPFFNGLVEFITSGPIVAIVLEGEGVVAAARKLIGATNPLTAEPGTIRGDFGVNIGRNIIHGSDAIETAQQEIALWFSPAELSDWTPTIQPWLYE.

Residues K9, F57, R85, T91, R102, and N112 each coordinate ATP. H115 acts as the Pros-phosphohistidine intermediate in catalysis.

Belongs to the NDK family. In terms of assembly, homotetramer. The cofactor is Mg(2+).

It is found in the cytoplasm. It carries out the reaction dZDP + ATP = dZTP + ADP. The catalysed reaction is a 2'-deoxyribonucleoside 5'-diphosphate + ATP = a 2'-deoxyribonucleoside 5'-triphosphate + ADP. It catalyses the reaction a ribonucleoside 5'-diphosphate + ATP = a ribonucleoside 5'-triphosphate + ADP. Its pathway is purine metabolism. Major role in the synthesis of nucleoside triphosphates other than ATP. The ATP gamma phosphate is transferred to the NDP beta phosphate via a ping-pong mechanism, using a phosphorylated active-site intermediate. In terms of biological role, (Microbial infection) Catalyzes the phosphorylation of dZDP to dZTP, when the bacterium is infected by a phage that produces the substrate for the synthesis of dZTP (2- amino-2'-deoxyadenosine 5'-triphosphate), which is then used by the phage as a DNA polymerase substrate. In Synechococcus elongatus (strain ATCC 33912 / PCC 7942 / FACHB-805) (Anacystis nidulans R2), this protein is Nucleoside diphosphate kinase.